The sequence spans 198 residues: C4b-binding protein beta chain (198 aa).

The N-terminal stretch at 1-17 is a signal peptide; it reads MFFWLMCYLVDVWLISA. One can recognise a Sushi 1; atypical; lacks a Cys domain in the interval 22–77; it reads HCPDPLLVTDEFSSLEPVNVNDTFMFKCNEHCIFKGSNWSQCRENHTRVTHSPVSK. N-linked (GlcNAc...) asparagine glycans are attached at residues Asn-42, Asn-59, and Asn-66. The 57-residue stretch at 79 to 135 folds into the Sushi 2 domain; the sequence is RDCGPPETPTHGYFEGRDFKSGSTITYYCEARYRLVGTQHQQCIDGEWTSAPPICEL. Cystine bridges form between Cys-81–Cys-121 and Cys-107–Cys-133.

In terms of assembly, disulfide-linked complex of alpha and beta chains.

It localises to the secreted. In terms of biological role, controls the classical pathway of complement activation. It binds as a cofactor to C3b/C4b inactivator (C3bINA), which then hydrolyzes the complement fragment C4b. It also accelerates the degradation of the C4bC2a complex (C3 convertase) by dissociating the complement fragment C2a. It also interacts with serum amyloid P component. The chain is C4b-binding protein beta chain (C4BPB) from Bos taurus (Bovine).